The chain runs to 294 residues: uncharacterized protein (294 aa).

A helical membrane pass occupies residues 5–25 (ILIILIIIIIVIISLIYLKNF). N-linked (GlcNAc...) asparagine; by host glycans are attached at residues Asn151, Asn170, Asn205, and Asn271.

It is found in the membrane. This is an uncharacterized protein from Acanthamoeba polyphaga (Amoeba).